Consider the following 73-residue polypeptide: RNA-binding protein Hfq (73 aa).

Positions 8 to 68 (DQFLNQIRKD…ISTFAPQKNV (61 aa)) constitute a Sm domain.

The protein belongs to the Hfq family. Homohexamer.

In terms of biological role, RNA chaperone that binds small regulatory RNA (sRNAs) and mRNAs to facilitate mRNA translational regulation in response to envelope stress, environmental stress and changes in metabolite concentrations. Also binds with high specificity to tRNAs. In Bacillus pumilus (strain SAFR-032), this protein is RNA-binding protein Hfq.